The following is a 188-amino-acid chain: Elongation factor P-like protein (188 aa).

This sequence belongs to the elongation factor P family.

The chain is Elongation factor P-like protein from Stenotrophomonas maltophilia (strain R551-3).